The following is a 142-amino-acid chain: NTF2-related export protein 2 (142 aa).

Residues 17 to 136 (AAEEFVNIYY…WKIASDCFRF (120 aa)) enclose the NTF2 domain.

Associates with NXF1, NXF2, NXF3 and NXF5.

The protein localises to the nucleus. It is found in the cytoplasm. Its function is as follows. Regulator of protein export for NES-containing proteins. Also plays a role in mRNA nuclear export. In Mus musculus (Mouse), this protein is NTF2-related export protein 2 (Nxt2).